Consider the following 337-residue polypeptide: Ribosomal RNA small subunit methyltransferase H (337 aa).

Residues 36-38 (GGH), Asp-56, Phe-82, Asp-100, and Gln-107 each bind S-adenosyl-L-methionine. The segment at 315-337 (LEERSKRIPNPQSPIPASQGDAQ) is disordered.

The protein belongs to the methyltransferase superfamily. RsmH family.

The protein resides in the cytoplasm. It catalyses the reaction cytidine(1402) in 16S rRNA + S-adenosyl-L-methionine = N(4)-methylcytidine(1402) in 16S rRNA + S-adenosyl-L-homocysteine + H(+). Its function is as follows. Specifically methylates the N4 position of cytidine in position 1402 (C1402) of 16S rRNA. This is Ribosomal RNA small subunit methyltransferase H from Xanthomonas euvesicatoria pv. vesicatoria (strain 85-10) (Xanthomonas campestris pv. vesicatoria).